The following is an 858-amino-acid chain: Elongation factor 2 (858 aa).

The region spanning 17-362 (ANIRNMSVIA…MITIHLPSPV (346 aa)) is the tr-type G domain. Residue 26–33 (AHVDHGKS) participates in GTP binding. Position 54 is a phosphothreonine (Thr54). Thr57 is modified (phosphothreonine; by EEF2K). Residue Thr59 is modified to Phosphothreonine. Lys152 is subject to N6-succinyllysine. GTP contacts are provided by residues 158-161 (NKMD) and 216-218 (SGL). An N6-acetyllysine modification is found at Lys235. Lys239 is subject to N6-acetyllysine; alternate. Lys239 participates in a covalent cross-link: Glycyl lysine isopeptide (Lys-Gly) (interchain with G-Cter in SUMO1); alternate. Residue Tyr265 is modified to Phosphotyrosine; by CSK. Lys272 bears the N6-acetyllysine; alternate mark. Residue Lys272 is modified to N6-succinyllysine; alternate. Residue Lys275 is modified to N6-acetyllysine. A Glycyl lysine isopeptide (Lys-Gly) (interchain with G-Cter in SUMO) cross-link involves residue Lys322. Residue Ser325 is modified to Phosphoserine. Position 373 is a phosphotyrosine; by CSK (Tyr373). Position 435 is a phosphothreonine (Thr435). N6-acetyllysine occurs at positions 439 and 445. The residue at position 502 (Ser502) is a Phosphoserine. Lys525 bears the N6,N6,N6-trimethyllysine; by EEF2KMT mark. Lys529 participates in a covalent cross-link: Glycyl lysine isopeptide (Lys-Gly) (interchain with G-Cter in SUMO). Lys572 carries the post-translational modification N6-succinyllysine. A Phosphoserine; by CDK2 modification is found at Ser595. Residue Lys619 is modified to N6-acetyllysine. At His715 the chain carries Diphthamide.

Belongs to the TRAFAC class translation factor GTPase superfamily. Classic translation factor GTPase family. EF-G/EF-2 subfamily. Binds to 80S ribosomes. Actively translating ribosomes show mutually exclusive binding of eIF5a (EIF5A or EIF5A2) and EEF2/eEF2. Interacts with SERBP1; interaction sequesters EEF2/eEF2 at the A-site of the ribosome, thereby blocking the interaction sites of the mRNA-tRNA complex, promoting ribosome stabilization and hibernation. Interacts with HABP4; interaction takes place at the A-site of hibernating ribosomes and promotes ribosome stabilization. Component of the mRNA surveillance SURF complex, at least composed of ERF1, ERF3 (ERF3A or ERF3B), EEF2, UPF1/RENT1, SMG1, SMG8 and SMG9. Interacts with RBPMS2. Post-translationally, phosphorylation by EF-2 kinase completely inactivates EF-2; it requires prior phosphorylation by CDK2 at Ser-595 during mitotic prometaphase. Phosphorylation by CSK promotes SUMOylation, proteolytic cleavage, and nuclear translocation if the C-terminal fragment. Diphthamide is 2-[3-carboxyamido-3-(trimethyl-ammonio)propyl]histidine. In terms of processing, ISGylated. Post-translationally, proteolytically processed at two sites following phosphorylation by CSK. SUMOylated following phosphorylation by CSK, promotes proteolytic cleavage.

It localises to the cytoplasm. The protein localises to the nucleus. It catalyses the reaction GTP + H2O = GDP + phosphate + H(+). Catalyzes the GTP-dependent ribosomal translocation step during translation elongation. During this step, the ribosome changes from the pre-translocational (PRE) to the post-translocational (POST) state as the newly formed A-site-bound peptidyl-tRNA and P-site-bound deacylated tRNA move to the P and E sites, respectively. Catalyzes the coordinated movement of the two tRNA molecules, the mRNA and conformational changes in the ribosome. This chain is Elongation factor 2 (EEF2), found in Pongo abelii (Sumatran orangutan).